A 130-amino-acid chain; its full sequence is Large ribosomal subunit protein bL12 (130 aa).

This sequence belongs to the bacterial ribosomal protein bL12 family. As to quaternary structure, homodimer. Part of the ribosomal stalk of the 50S ribosomal subunit. Forms a multimeric L10(L12)X complex, where L10 forms an elongated spine to which 2 to 4 L12 dimers bind in a sequential fashion. Binds GTP-bound translation factors.

In terms of biological role, forms part of the ribosomal stalk which helps the ribosome interact with GTP-bound translation factors. Is thus essential for accurate translation. The protein is Large ribosomal subunit protein bL12 of Parafrankia sp. (strain EAN1pec).